Consider the following 248-residue polypeptide: NADH dehydrogenase [ubiquinone] flavoprotein 2, mitochondrial (248 aa).

The transit peptide at 1 to 31 (MFSLALRARASGLTAQWGRHARNLHKTAVQN) directs the protein to the mitochondrion. 4 residues coordinate [2Fe-2S] cluster: Cys134, Cys139, Cys175, and Cys179. Position 192 is a phosphotyrosine; by SRC (Tyr192). Positions 229–248 (GLTSLTEPPKGPGFGVQAGL) are disordered.

Belongs to the complex I 24 kDa subunit family. In terms of assembly, core subunit of respiratory chain NADH dehydrogenase (Complex I) which is composed of 45 different subunits. This is a component of the flavoprotein-sulfur (FP) fragment of the enzyme. The cofactor is [2Fe-2S] cluster.

The protein localises to the mitochondrion inner membrane. The catalysed reaction is a ubiquinone + NADH + 5 H(+)(in) = a ubiquinol + NAD(+) + 4 H(+)(out). In terms of biological role, core subunit of the mitochondrial membrane respiratory chain NADH dehydrogenase (Complex I) which catalyzes electron transfer from NADH through the respiratory chain, using ubiquinone as an electron acceptor. Parts of the peripheral arm of the enzyme, where the electrons from NADH are accepted by flavin mononucleotide (FMN) and then passed along a chain of iron-sulfur clusters by electron tunnelling to the final acceptor ubiquinone. Contains one iron-sulfur cluster. This is NADH dehydrogenase [ubiquinone] flavoprotein 2, mitochondrial from Rattus norvegicus (Rat).